The following is a 338-amino-acid chain: Fructose-1,6-bisphosphatase class 1 (338 aa).

Positions 91, 113, 115, and 116 each coordinate Mg(2+). Substrate-binding positions include 116-119, asparagine 208, and lysine 274; that span reads DGSS. Glutamate 280 is a binding site for Mg(2+).

Belongs to the FBPase class 1 family. Homotetramer. Mg(2+) serves as cofactor.

It localises to the cytoplasm. It carries out the reaction beta-D-fructose 1,6-bisphosphate + H2O = beta-D-fructose 6-phosphate + phosphate. Its pathway is carbohydrate biosynthesis; gluconeogenesis. In Ralstonia nicotianae (strain ATCC BAA-1114 / GMI1000) (Ralstonia solanacearum), this protein is Fructose-1,6-bisphosphatase class 1.